We begin with the raw amino-acid sequence, 160 residues long: Cytochrome b6-f complex subunit 4 (160 aa).

A run of 3 helical transmembrane segments spans residues 36-56 (LLYI…GLAV), 95-115 (LLGV…PFLE), and 131-151 (TVFL…ALPI).

The protein belongs to the cytochrome b family. PetD subfamily. As to quaternary structure, the 4 large subunits of the cytochrome b6-f complex are cytochrome b6, subunit IV (17 kDa polypeptide, petD), cytochrome f and the Rieske protein, while the 4 small subunits are petG, petL, petM and petN. The complex functions as a dimer.

Its subcellular location is the plastid. The protein resides in the chloroplast thylakoid membrane. Component of the cytochrome b6-f complex, which mediates electron transfer between photosystem II (PSII) and photosystem I (PSI), cyclic electron flow around PSI, and state transitions. The polypeptide is Cytochrome b6-f complex subunit 4 (Spirogyra maxima (Green alga)).